The following is a 161-amino-acid chain: MEYNTSQLCDIYQDQVDVVEPMFSTFGGRSSFGGLVTTIKCFEANGIIRQIVKESGVGRVLLIDGGGSLRRALIDADIAAIAADNGWEGIICYGSVREVDALADLEIGIQALASIPVGADEDDTGDSELPVNFGGVTFLPEDHIYADTTGVILSPEPLDIE.

This sequence belongs to the RraA family. In terms of assembly, homotrimer. Binds to both RNA-binding sites in the C-terminal region of Rne and to RhlB.

It localises to the cytoplasm. Globally modulates RNA abundance by binding to RNase E (Rne) and regulating its endonucleolytic activity. Can modulate Rne action in a substrate-dependent manner by altering the composition of the degradosome. Modulates RNA-binding and helicase activities of the degradosome. The sequence is that of Regulator of ribonuclease activity A from Tolumonas auensis (strain DSM 9187 / NBRC 110442 / TA 4).